Reading from the N-terminus, the 71-residue chain is uncharacterized protein (71 aa).

A compositionally biased stretch (basic residues) spans 1–16; it reads MAKSQAKKKRGHRLRN. 2 disordered regions span residues 1 to 39 and 51 to 71; these read MAKS…RMTK and KNPY…QKAA. The segment covering 25–35 has biased composition (polar residues); that stretch reads RGSTPSFSTHG. Residues 51 to 64 show a composition bias toward basic and acidic residues; that stretch reads KNPYDHTAVDDKDF.

This is an uncharacterized protein from Bacillus subtilis (strain 168).